A 395-amino-acid chain; its full sequence is Chaperone protein DnaJ (395 aa).

The J domain maps to 4 to 69 (DYYEVLGVGR…DKRRRYDQFG (66 aa)). A CR-type zinc finger spans residues 152-233 (GVEKTLKIKK…CHGEGIKQGE (82 aa)). Cys-165, Cys-168, Cys-181, Cys-184, Cys-207, Cys-210, Cys-221, and Cys-224 together coordinate Zn(2+). 4 CXXCXGXG motif repeats span residues 165–172 (CDVCNGTG), 181–188 (CPTCQGTG), 207–214 (CPTCGGEG), and 221–228 (CTACHGEG).

The protein belongs to the DnaJ family. As to quaternary structure, homodimer. Zn(2+) is required as a cofactor.

The protein localises to the cytoplasm. Its function is as follows. Participates actively in the response to hyperosmotic and heat shock by preventing the aggregation of stress-denatured proteins and by disaggregating proteins, also in an autonomous, DnaK-independent fashion. Unfolded proteins bind initially to DnaJ; upon interaction with the DnaJ-bound protein, DnaK hydrolyzes its bound ATP, resulting in the formation of a stable complex. GrpE releases ADP from DnaK; ATP binding to DnaK triggers the release of the substrate protein, thus completing the reaction cycle. Several rounds of ATP-dependent interactions between DnaJ, DnaK and GrpE are required for fully efficient folding. Also involved, together with DnaK and GrpE, in the DNA replication of plasmids through activation of initiation proteins. The sequence is that of Chaperone protein DnaJ from Prosthecochloris aestuarii (strain DSM 271 / SK 413).